The primary structure comprises 79 residues: Cell division protein ZapB (79 aa).

Residues 1–78 are a coiled coil; it reads MSLEALDQLQ…LNSLLGKMDD (78 aa).

The protein belongs to the ZapB family. In terms of assembly, homodimer. The ends of the coiled-coil dimer bind to each other, forming polymers. Interacts with FtsZ.

The protein localises to the cytoplasm. Its function is as follows. Non-essential, abundant cell division factor that is required for proper Z-ring formation. It is recruited early to the divisome by direct interaction with FtsZ, stimulating Z-ring assembly and thereby promoting cell division earlier in the cell cycle. Its recruitment to the Z-ring requires functional FtsA or ZipA. The polypeptide is Cell division protein ZapB (Hamiltonella defensa subsp. Acyrthosiphon pisum (strain 5AT)).